The sequence spans 669 residues: DNA ligase (669 aa).

Residues 31-35, 80-81, and Glu112 each bind NAD(+); these read DAEYD and SL. The active-site N6-AMP-lysine intermediate is the Lys114. NAD(+) contacts are provided by Arg135, Glu172, Lys289, and Lys313. Zn(2+) contacts are provided by Cys407, Cys410, Cys425, and Cys431. Residues 591 to 669 form the BRCT domain; it reads SVPQPLADKV…EEQLIEILNN (79 aa).

This sequence belongs to the NAD-dependent DNA ligase family. LigA subfamily. Mg(2+) is required as a cofactor. Mn(2+) serves as cofactor.

It carries out the reaction NAD(+) + (deoxyribonucleotide)n-3'-hydroxyl + 5'-phospho-(deoxyribonucleotide)m = (deoxyribonucleotide)n+m + AMP + beta-nicotinamide D-nucleotide.. In terms of biological role, DNA ligase that catalyzes the formation of phosphodiester linkages between 5'-phosphoryl and 3'-hydroxyl groups in double-stranded DNA using NAD as a coenzyme and as the energy source for the reaction. It is essential for DNA replication and repair of damaged DNA. In Aliivibrio salmonicida (strain LFI1238) (Vibrio salmonicida (strain LFI1238)), this protein is DNA ligase.